Consider the following 65-residue polypeptide: Beta-defensin 41 (65 aa).

Positions methionine 1–alanine 19 are cleaved as a signal peptide. 3 disulfides stabilise this stretch: cysteine 35-cysteine 63, cysteine 42-cysteine 56, and cysteine 46-cysteine 64.

Belongs to the beta-defensin family. Isoform 2 is epididymis-specific and expressed mainly in the proximal caput.

It localises to the secreted. Functionally, has bactericidal activity. Its function is as follows. Isoform 2 may play a role in the antimicrobial protection of sperm and urogenital tract epithelia. The sequence is that of Beta-defensin 41 from Mus musculus (Mouse).